The chain runs to 1051 residues: Protein ALWAYS EARLY 2 (1051 aa).

Composition is skewed to basic residues over residues 1-11 (MAPVRKSRSVN) and 27-36 (SKKNKLRKKL). Positions 1-37 (MAPVRKSRSVNKRFTNETSPRKDAGKSKKNKLRKKLS) are disordered. Positions 39-93 (KLGPQWTRLELERFYDAYRKHGQEWRRVAAAIRNSRSVDMVEALFNMNRAYLSLP) constitute an SANT domain. Disordered stretches follow at residues 114-158 (EGSG…IGSP), 170-210 (ANGT…RKQF), 225-293 (TDAS…KDTT), 323-375 (AECN…TSGA), 397-605 (SELS…SSRS), and 948-981 (SIEHHHNPSPSNGSEPVANNDLNSQDGSEKNAQM). A compositionally biased stretch (basic and acidic residues) spans 120 to 130 (GEGHDASEVPR). Basic residues predominate over residues 131 to 140 (KQQKRKRAKP). Residues 279–293 (ESSRERKLDSDKDTT) show a composition bias toward basic and acidic residues. Residues 323-332 (AECNDSDDNG) are compositionally biased toward acidic residues. 2 stretches are compositionally biased toward basic and acidic residues: residues 350 to 372 (AAIEASREKYSPRSPKKRDDKHT) and 403 to 417 (LKEERTEYDMDEKSS). The segment covering 560-574 (KQVSDSGPTSLSQKP) has biased composition (polar residues). Residues 586–597 (LQEKAKSSETTH) show a composition bias toward basic and acidic residues. A compositionally biased stretch (polar residues) spans 967-981 (NDLNSQDGSEKNAQM).

Interacts with SNL1 (via PAH3). Expressed ubiquitously in vegetative and reproductive tissues.

It localises to the nucleus. This chain is Protein ALWAYS EARLY 2 (ALY2), found in Arabidopsis thaliana (Mouse-ear cress).